The chain runs to 99 residues: Protein AC150 (99 aa).

The Chitin-binding type-2 domain occupies glycine 38–alanine 96. The cysteines at positions 73 and 86 are disulfide-linked.

It is found in the host nucleus. Its subcellular location is the virion. Functionally, plays a role in primary oral infection of the host. The chain is Protein AC150 from Autographa californica nuclear polyhedrosis virus (AcMNPV).